The primary structure comprises 582 residues: Arginine--tRNA ligase (582 aa).

Positions 136–146 (ANPTGPMHMGH) match the 'HIGH' region motif.

This sequence belongs to the class-I aminoacyl-tRNA synthetase family. Monomer.

The protein resides in the cytoplasm. It carries out the reaction tRNA(Arg) + L-arginine + ATP = L-arginyl-tRNA(Arg) + AMP + diphosphate. This chain is Arginine--tRNA ligase, found in Novosphingobium aromaticivorans (strain ATCC 700278 / DSM 12444 / CCUG 56034 / CIP 105152 / NBRC 16084 / F199).